The primary structure comprises 352 residues: Putative histone-lysine N-methyltransferase ASHH4 (352 aa).

An AWS domain is found at 60–109; it reads DHGIFCSCSLDPGSSTLCGSDCNCGILLSSCSSSCKCSSECTNKPFQQRH. In terms of domain architecture, SET spans 111 to 228; that stretch reads KKMKLVQTEK…KGEQLTYDYQ (118 aa). One can recognise a Post-SET domain in the interval 234-250; the sequence is ADQDCYCGAVCCRKKLG.

This sequence belongs to the class V-like SAM-binding methyltransferase superfamily. Histone-lysine methyltransferase family. SET2 subfamily.

It localises to the nucleus. Its subcellular location is the chromosome. The protein localises to the centromere. It catalyses the reaction L-lysyl-[histone] + S-adenosyl-L-methionine = N(6)-methyl-L-lysyl-[histone] + S-adenosyl-L-homocysteine + H(+). Histone methyltransferase. The sequence is that of Putative histone-lysine N-methyltransferase ASHH4 (ASHH4) from Arabidopsis thaliana (Mouse-ear cress).